The sequence spans 331 residues: Phenylalanine--tRNA ligase alpha subunit (331 aa).

Glu252 contributes to the Mg(2+) binding site.

Belongs to the class-II aminoacyl-tRNA synthetase family. Phe-tRNA synthetase alpha subunit type 1 subfamily. As to quaternary structure, tetramer of two alpha and two beta subunits. Mg(2+) serves as cofactor.

The protein localises to the cytoplasm. The enzyme catalyses tRNA(Phe) + L-phenylalanine + ATP = L-phenylalanyl-tRNA(Phe) + AMP + diphosphate + H(+). This is Phenylalanine--tRNA ligase alpha subunit from Xanthomonas oryzae pv. oryzae (strain MAFF 311018).